A 300-amino-acid chain; its full sequence is MIRQRTLKNSIRATGVGLHTGEKVYLTLRPAPANAGIIFRRTDLDREIKATAAAVGDTRLSTCLVEDGVRVSTVEHLLSALAGLGIDNCYVDLSAAEVPIMDGSAAPFVFLVRSAGIKEQEAPKRFVRILEPVQVVDGDKWVAFEPFEGFKVSFTIDFDHPVFLDQHARAEVDFSSTSFIKEVSRARTFGFMKEIEALRASRLALGGSLDNAIVVDDYRVLNEDGLRYRDEFVKHKILDAIGDLYLLGSSLIGSFHGHKSGHALNNRLLRKLLEHEHAWEEVTFEELDELPIAYDQPVVA.

Residues His76, His235, and Asp239 each contribute to the Zn(2+) site. His262 acts as the Proton donor in catalysis.

It belongs to the LpxC family. Zn(2+) serves as cofactor.

The catalysed reaction is a UDP-3-O-[(3R)-3-hydroxyacyl]-N-acetyl-alpha-D-glucosamine + H2O = a UDP-3-O-[(3R)-3-hydroxyacyl]-alpha-D-glucosamine + acetate. It functions in the pathway glycolipid biosynthesis; lipid IV(A) biosynthesis; lipid IV(A) from (3R)-3-hydroxytetradecanoyl-[acyl-carrier-protein] and UDP-N-acetyl-alpha-D-glucosamine: step 2/6. Catalyzes the hydrolysis of UDP-3-O-myristoyl-N-acetylglucosamine to form UDP-3-O-myristoylglucosamine and acetate, the committed step in lipid A biosynthesis. This is UDP-3-O-acyl-N-acetylglucosamine deacetylase from Halorhodospira halophila (strain DSM 244 / SL1) (Ectothiorhodospira halophila (strain DSM 244 / SL1)).